We begin with the raw amino-acid sequence, 520 residues long: Na(+)/H(+) antiporter NhaB (520 aa).

The next 12 membrane-spanning stretches (helical) occupy residues glycine 27 to isoleucine 49, tyrosine 62 to alanine 82, leucine 97 to phenylalanine 117, leucine 120 to phenylalanine 140, phenylalanine 144 to isoleucine 164, leucine 202 to proline 222, phenylalanine 238 to isoleucine 258, glycine 303 to isoleucine 323, threonine 348 to isoleucine 368, leucine 391 to valine 411, alanine 447 to isoleucine 467, and valine 475 to phenylalanine 495.

The protein belongs to the NhaB Na(+)/H(+) (TC 2.A.34) antiporter family.

It is found in the cell inner membrane. It carries out the reaction 2 Na(+)(in) + 3 H(+)(out) = 2 Na(+)(out) + 3 H(+)(in). Functionally, na(+)/H(+) antiporter that extrudes sodium in exchange for external protons. This is Na(+)/H(+) antiporter NhaB from Cronobacter sakazakii (strain ATCC BAA-894) (Enterobacter sakazakii).